Consider the following 557-residue polypeptide: Probable protein kinase UbiB (557 aa).

The 389-residue stretch at 121–509 folds into the Protein kinase domain; it reads AFDTTPLASA…RKLQTRVVTA (389 aa). ATP contacts are provided by residues 127 to 135 and lysine 154; that span reads LASASIAQV. Aspartate 289 (proton acceptor) is an active-site residue. 2 helical membrane passes run 506–526 and 535–555; these read VVTA…YGLH and VPVW…IAWL.

Belongs to the ABC1 family. UbiB subfamily.

The protein resides in the cell inner membrane. Its pathway is cofactor biosynthesis; ubiquinone biosynthesis [regulation]. Functionally, is probably a protein kinase regulator of UbiI activity which is involved in aerobic coenzyme Q (ubiquinone) biosynthesis. This chain is Probable protein kinase UbiB, found in Xanthomonas campestris pv. campestris (strain B100).